A 208-amino-acid chain; its full sequence is Small ribosomal subunit protein uS4 (208 aa).

Residues 98–178 (SRLDNVVYRM…RPKWLEYDAE (81 aa)) enclose the S4 RNA-binding domain.

Belongs to the universal ribosomal protein uS4 family. As to quaternary structure, part of the 30S ribosomal subunit. Contacts protein S5. The interaction surface between S4 and S5 is involved in control of translational fidelity.

In terms of biological role, one of the primary rRNA binding proteins, it binds directly to 16S rRNA where it nucleates assembly of the body of the 30S subunit. Functionally, with S5 and S12 plays an important role in translational accuracy. In Acetivibrio thermocellus (strain ATCC 27405 / DSM 1237 / JCM 9322 / NBRC 103400 / NCIMB 10682 / NRRL B-4536 / VPI 7372) (Clostridium thermocellum), this protein is Small ribosomal subunit protein uS4.